The primary structure comprises 497 residues: Probable cytosol aminopeptidase (497 aa).

Residues Lys-267 and Asp-272 each coordinate Mn(2+). Lys-279 is an active-site residue. Mn(2+) is bound by residues Asp-290, Asp-349, and Glu-351. The active site involves Arg-353.

This sequence belongs to the peptidase M17 family. Mn(2+) serves as cofactor.

Its subcellular location is the cytoplasm. The enzyme catalyses Release of an N-terminal amino acid, Xaa-|-Yaa-, in which Xaa is preferably Leu, but may be other amino acids including Pro although not Arg or Lys, and Yaa may be Pro. Amino acid amides and methyl esters are also readily hydrolyzed, but rates on arylamides are exceedingly low.. The catalysed reaction is Release of an N-terminal amino acid, preferentially leucine, but not glutamic or aspartic acids.. Its function is as follows. Presumably involved in the processing and regular turnover of intracellular proteins. Catalyzes the removal of unsubstituted N-terminal amino acids from various peptides. The sequence is that of Probable cytosol aminopeptidase from Nitrosomonas eutropha (strain DSM 101675 / C91 / Nm57).